The sequence spans 195 residues: MTVRKQKRFGLDIDGTVTDPATFLPYLNEQFQKTLTLEDITDYDLTKSLGITSEEFWKWMEQHEQTIYKQAKKADGVDQVLEEWKQEHELIYITARASHLEEITKNWFEQQNLPFHHIELVGKHDKIEAIRTHEIDIFFEDKHDNAVAIAETFAIPVILMDTPYNRLPTPANVVRINHWTEAKAWVDEWLKRSGF.

Belongs to the 5'(3')-deoxyribonucleotidase family.

The protein is Putative nucleotidase BH1399 of Halalkalibacterium halodurans (strain ATCC BAA-125 / DSM 18197 / FERM 7344 / JCM 9153 / C-125) (Bacillus halodurans).